The primary structure comprises 208 residues: Uracil phosphoribosyltransferase (208 aa).

5-phospho-alpha-D-ribose 1-diphosphate-binding positions include R78, R103, and D130–S138. Uracil is bound by residues I193 and G198–A200. D199 contributes to the 5-phospho-alpha-D-ribose 1-diphosphate binding site.

Belongs to the UPRTase family. The cofactor is Mg(2+).

It catalyses the reaction UMP + diphosphate = 5-phospho-alpha-D-ribose 1-diphosphate + uracil. It functions in the pathway pyrimidine metabolism; UMP biosynthesis via salvage pathway; UMP from uracil: step 1/1. Allosterically activated by GTP. In terms of biological role, catalyzes the conversion of uracil and 5-phospho-alpha-D-ribose 1-diphosphate (PRPP) to UMP and diphosphate. This Colwellia psychrerythraea (strain 34H / ATCC BAA-681) (Vibrio psychroerythus) protein is Uracil phosphoribosyltransferase.